Reading from the N-terminus, the 229-residue chain is Leucyl/phenylalanyl-tRNA--protein transferase (229 aa).

It belongs to the L/F-transferase family.

The protein localises to the cytoplasm. It catalyses the reaction N-terminal L-lysyl-[protein] + L-leucyl-tRNA(Leu) = N-terminal L-leucyl-L-lysyl-[protein] + tRNA(Leu) + H(+). The enzyme catalyses N-terminal L-arginyl-[protein] + L-leucyl-tRNA(Leu) = N-terminal L-leucyl-L-arginyl-[protein] + tRNA(Leu) + H(+). The catalysed reaction is L-phenylalanyl-tRNA(Phe) + an N-terminal L-alpha-aminoacyl-[protein] = an N-terminal L-phenylalanyl-L-alpha-aminoacyl-[protein] + tRNA(Phe). Its function is as follows. Functions in the N-end rule pathway of protein degradation where it conjugates Leu, Phe and, less efficiently, Met from aminoacyl-tRNAs to the N-termini of proteins containing an N-terminal arginine or lysine. This Desulforapulum autotrophicum (strain ATCC 43914 / DSM 3382 / VKM B-1955 / HRM2) (Desulfobacterium autotrophicum) protein is Leucyl/phenylalanyl-tRNA--protein transferase.